The primary structure comprises 4841 residues: Nonribosomal peptide synthetase 2 (4841 aa).

Residues 26–429 are adenylation 1; it reads VKPPNQNVAL…GRLSDGQVKL (404 aa). The region spanning 531–604 is the Carrier 1 domain; the sequence is EPVDEFESSL…DIIFAARRQI (74 aa). The residue at position 565 (Ser-565) is an O-(pantetheine 4'-phosphoryl)serine. Positions 640 to 1042 are condensation 1; that stretch reads EEIIPCTPLQ…ILERPTQEIK (403 aa). The interval 1072–1463 is adenylation 2; the sequence is FEDVVRKHPE…GRIDDQVKLR (392 aa). The Carrier 2 domain maps to 1587-1665; sequence EGDWSRMDLV…QLAKHLEGKP (79 aa). Ser-1625 carries the O-(pantetheine 4'-phosphoryl)serine modification. The tract at residues 1702–2043 is condensation 2; sequence ILPCTPLQEA…QTVWELEADS (342 aa). The Carrier 3 domain maps to 2139–2212; the sequence is SEVELDVRQV…KIAAKLLENR (74 aa). The residue at position 2173 (Ser-2173) is an O-(pantetheine 4'-phosphoryl)serine. The condensation 3 stretch occupies residues 2248–2663; it reads AVLPCTPLQS…NHLATEDEAF (416 aa). The interval 2695–3090 is adenylation 3; the sequence is AAVHPNKLAL…GRADDQVKLR (396 aa). In terms of domain architecture, Carrier 4 spans 3219-3293; that stretch reads QDILVLLYDA…DLANCLAKAA (75 aa). Ser-3253 bears the O-(pantetheine 4'-phosphoryl)serine mark. The interval 3333 to 3735 is condensation 4; that stretch reads IAPCSPLQEG…DLAAESPQSE (403 aa). Positions 3759-3838 constitute a Carrier 5 domain; the sequence is QNSFEWTSEA…KMITELASIT (80 aa). Residue Ser-3799 is modified to O-(pantetheine 4'-phosphoryl)serine. Residues 3873–4242 are condensation 5; it reads SVLPPTHLQE…VEAEAVSDSL (370 aa). Residues 4318-4394 enclose the Carrier 6 domain; the sequence is IEWNQNEIGI…EMAQKADTKL (77 aa). O-(pantetheine 4'-phosphoryl)serine is present on Ser-4355. Residues 4430–4726 form a condensation 6 region; the sequence is EVLPALPMQV…DIHLITSESR (297 aa).

It belongs to the NRP synthetase family.

The protein operates within siderophore biosynthesis. Nonribosomal peptide synthetase; part of the gene cluster that mediates the biosynthesis of hydroxamate-containing siderophores that play a critical role in virulence. Gibberella zeae produces extracellular coprogen-type siderophores as well as the intracellular siderophore ferricrocin. The role of extracellular siderophores is to supply iron to the fungus during plant infection, and the intracellular ferricrocin is required for intracellular iron distribution and storage with a crucial role in ascus and ascospore development. SID1 catalyzes the conversion of L-ornithine to N(5)-hydroxyornithine, the first step in the biosynthesis of all hydroxamate-containing siderophores. The assembly of extracellular coprogen-type siderophores is performed by the nonribosomal peptide synthetase (NRPS) NPS6 whereas the intracellular siderophore ferricrocin is assembled by NPS2. This chain is Nonribosomal peptide synthetase 2, found in Gibberella zeae (strain ATCC MYA-4620 / CBS 123657 / FGSC 9075 / NRRL 31084 / PH-1) (Wheat head blight fungus).